The sequence spans 2629 residues: Protein DOP1 homolog (2629 aa).

Disordered stretches follow at residues 561–584, 605–652, 688–710, 1278–1340, 1371–1395, 1435–1471, and 1766–1785; these read NKGV…SRLN, SASN…TPRS, AGNV…PQFY, MDES…SSSA, TYRL…QTEH, ISKT…ATDS, and RQDT…SPTR. Polar residues-rich tracts occupy residues 605–615 and 636–647; these read SASNQSVGRQS and ASDTGQQSSSDL. Acidic residues predominate over residues 1307 to 1320; it reads DITDNSDSSDFESD. Positions 1321–1333 are enriched in basic and acidic residues; sequence SELRETSLEKEDS. Polar residues-rich tracts occupy residues 1381-1391 and 1435-1450; these read GENSLNSVATD and ISKT…SCSQ.

This sequence belongs to the DOP1 family.

Its subcellular location is the golgi apparatus membrane. Its function is as follows. May be involved in protein traffic between late Golgi and early endosomes. The sequence is that of Protein DOP1 homolog from Drosophila pseudoobscura pseudoobscura (Fruit fly).